Consider the following 300-residue polypeptide: Ornithine carbamoyltransferase (300 aa).

Residues 49 to 52, glutamine 76, arginine 100, and 127 to 130 contribute to the carbamoyl phosphate site; these read STRT and HPCQ. Residues asparagine 158, aspartate 218, and 222 to 223 each bind L-ornithine; that span reads SM. Carbamoyl phosphate is bound by residues 258–259 and arginine 286; that span reads CL.

This sequence belongs to the aspartate/ornithine carbamoyltransferase superfamily. OTCase family.

The protein localises to the cytoplasm. The enzyme catalyses carbamoyl phosphate + L-ornithine = L-citrulline + phosphate + H(+). It functions in the pathway amino-acid biosynthesis; L-arginine biosynthesis; L-arginine from L-ornithine and carbamoyl phosphate: step 1/3. Its function is as follows. Reversibly catalyzes the transfer of the carbamoyl group from carbamoyl phosphate (CP) to the N(epsilon) atom of ornithine (ORN) to produce L-citrulline. The sequence is that of Ornithine carbamoyltransferase from Nitratidesulfovibrio vulgaris (strain ATCC 29579 / DSM 644 / CCUG 34227 / NCIMB 8303 / VKM B-1760 / Hildenborough) (Desulfovibrio vulgaris).